A 282-amino-acid polypeptide reads, in one-letter code: Biotin synthase (282 aa).

In terms of domain architecture, Radical SAM core spans 1 to 228 (MQEIFLCSIS…NARLMVAGGR (228 aa)). Residues Cys17, Cys21, and Cys24 each coordinate [4Fe-4S] cluster. [2Fe-2S] cluster-binding residues include Cys61, Cys96, Cys154, and Arg221.

This sequence belongs to the radical SAM superfamily. Biotin synthase family. In terms of assembly, homodimer. Requires [4Fe-4S] cluster as cofactor. [2Fe-2S] cluster serves as cofactor.

It carries out the reaction (4R,5S)-dethiobiotin + (sulfur carrier)-SH + 2 reduced [2Fe-2S]-[ferredoxin] + 2 S-adenosyl-L-methionine = (sulfur carrier)-H + biotin + 2 5'-deoxyadenosine + 2 L-methionine + 2 oxidized [2Fe-2S]-[ferredoxin]. It functions in the pathway cofactor biosynthesis; biotin biosynthesis; biotin from 7,8-diaminononanoate: step 2/2. Catalyzes the conversion of dethiobiotin (DTB) to biotin by the insertion of a sulfur atom into dethiobiotin via a radical-based mechanism. The sequence is that of Biotin synthase from Helicobacter pylori (strain G27).